A 291-amino-acid chain; its full sequence is N-acetylmannosamine kinase (291 aa).

ATP-binding positions include 5–12 (AIDIGGTK) and 132–139 (GVGGGVVS). The Zn(2+) site is built by His-156, Cys-166, Cys-168, and Cys-173.

Belongs to the ROK (NagC/XylR) family. NanK subfamily. Homodimer.

The enzyme catalyses an N-acyl-D-mannosamine + ATP = an N-acyl-D-mannosamine 6-phosphate + ADP + H(+). It functions in the pathway amino-sugar metabolism; N-acetylneuraminate degradation; D-fructose 6-phosphate from N-acetylneuraminate: step 2/5. Catalyzes the phosphorylation of N-acetylmannosamine (ManNAc) to ManNAc-6-P. This chain is N-acetylmannosamine kinase, found in Escherichia coli O157:H7.